The following is a 224-amino-acid chain: MAISDWPEAERPREKLIEKGAAALSDAELLAIFLRTGITGVSAVELARKLLTHFGSLTKLCAASLHEFSELPGMGPAKFAQLQAVMEMAKRALAEELKNGDIMDSPQSVRNYLCLSLKGKPYEVFVGIFLDARHRTIVTEELFNGTLTQASVYPREVVKRALYHNAAAMIFAHNHPSGIAEPSTADEILTQSLKQALALVDVKVLDHFVIGSSEVVSFAERGLI.

The region spanning 102-224 (IMDSPQSVRN…VVSFAERGLI (123 aa)) is the MPN domain. Residues His-173, His-175, and Asp-186 each coordinate Zn(2+). Residues 173–186 (HNHPSGIAEPSTAD) carry the JAMM motif motif.

The protein belongs to the UPF0758 family.

This is UPF0758 protein NE1464 from Nitrosomonas europaea (strain ATCC 19718 / CIP 103999 / KCTC 2705 / NBRC 14298).